The primary structure comprises 286 residues: 33 kDa chaperonin (286 aa).

2 cysteine pairs are disulfide-bonded: Cys-225–Cys-227 and Cys-258–Cys-261.

It belongs to the HSP33 family. Post-translationally, under oxidizing conditions two disulfide bonds are formed involving the reactive cysteines. Under reducing conditions zinc is bound to the reactive cysteines and the protein is inactive.

It localises to the cytoplasm. Redox regulated molecular chaperone. Protects both thermally unfolding and oxidatively damaged proteins from irreversible aggregation. Plays an important role in the bacterial defense system toward oxidative stress. The sequence is that of 33 kDa chaperonin from Shewanella frigidimarina (strain NCIMB 400).